The primary structure comprises 233 residues: Large ribosomal subunit protein uL1 (233 aa).

This sequence belongs to the universal ribosomal protein uL1 family. As to quaternary structure, part of the 50S ribosomal subunit.

Binds directly to 23S rRNA. The L1 stalk is quite mobile in the ribosome, and is involved in E site tRNA release. In terms of biological role, protein L1 is also a translational repressor protein, it controls the translation of the L11 operon by binding to its mRNA. This Proteus mirabilis (strain HI4320) protein is Large ribosomal subunit protein uL1.